A 567-amino-acid chain; its full sequence is Type II secretion system protein E (567 aa).

325 to 332 provides a ligand contact to ATP; sequence GPTGSGKT.

Belongs to the GSP E family. As to quaternary structure, forms homooligomers; most probably hexamers. Interacts with XpsL/GspL.

It localises to the cell inner membrane. The catalysed reaction is ATP + H2O + cellular proteinSide 1 = ADP + phosphate + cellular proteinSide 2.. Functionally, ATPase component of the type II secretion system required for the energy-dependent secretion of extracellular factors such as proteases and toxins from the periplasm. Acts as a molecular motor to provide the energy that is required for assembly of the pseudopilus and the extrusion of substrates generated in the cytoplasm. The chain is Type II secretion system protein E (xpsE) from Xanthomonas campestris pv. campestris (strain ATCC 33913 / DSM 3586 / NCPPB 528 / LMG 568 / P 25).